The chain runs to 124 residues: Large ribosomal subunit protein bL12 (124 aa).

The protein belongs to the bacterial ribosomal protein bL12 family. In terms of assembly, homodimer. Part of the ribosomal stalk of the 50S ribosomal subunit. Forms a multimeric L10(L12)X complex, where L10 forms an elongated spine to which 2 to 4 L12 dimers bind in a sequential fashion. Binds GTP-bound translation factors.

Forms part of the ribosomal stalk which helps the ribosome interact with GTP-bound translation factors. Is thus essential for accurate translation. This is Large ribosomal subunit protein bL12 from Wolinella succinogenes (strain ATCC 29543 / DSM 1740 / CCUG 13145 / JCM 31913 / LMG 7466 / NCTC 11488 / FDC 602W) (Vibrio succinogenes).